The primary structure comprises 856 residues: Rod cGMP-specific 3',5'-cyclic phosphodiesterase subunit beta (856 aa).

N-acetylserine is present on S2. GAF domains are found at residues 71-220 (NMER…TLNL) and 252-429 (DIER…GWSV). Residues 481-814 (EEDELGKILK…KEWKALADEY (334 aa)) form the PDEase domain. H557 functions as the Proton donor in the catalytic mechanism. Residues H561, H597, D598, and D718 each coordinate a divalent metal cation. C853 carries S-geranylgeranyl cysteine lipidation. Positions 854–856 (CIL) are cleaved as a propeptide — removed in mature form.

The protein belongs to the cyclic nucleotide phosphodiesterase family. In terms of assembly, oligomer composed of two catalytic chains (alpha and beta), an inhibitory chain (gamma) and the delta chain. It depends on a divalent metal cation as a cofactor.

It localises to the membrane. It is found in the cell projection. Its subcellular location is the cilium. The protein resides in the photoreceptor outer segment. It carries out the reaction 3',5'-cyclic GMP + H2O = GMP + H(+). In terms of biological role, rod-specific cGMP phosphodiesterase that catalyzes the hydrolysis of 3',5'-cyclic GMP. Necessary for the formation of a functional phosphodiesterase holoenzyme. Involved in retinal circadian rhythm photoentrainment via modulation of UVA and orange light-induced phase-shift of the retina clock. May participate in processes of transmission and amplification of the visual signal. In Mus musculus (Mouse), this protein is Rod cGMP-specific 3',5'-cyclic phosphodiesterase subunit beta.